The sequence spans 396 residues: Tryptophan synthase beta chain (396 aa).

Residue Lys86 is modified to N6-(pyridoxal phosphate)lysine.

Belongs to the TrpB family. Tetramer of two alpha and two beta chains. Pyridoxal 5'-phosphate serves as cofactor.

The enzyme catalyses (1S,2R)-1-C-(indol-3-yl)glycerol 3-phosphate + L-serine = D-glyceraldehyde 3-phosphate + L-tryptophan + H2O. The protein operates within amino-acid biosynthesis; L-tryptophan biosynthesis; L-tryptophan from chorismate: step 5/5. Its function is as follows. The beta subunit is responsible for the synthesis of L-tryptophan from indole and L-serine. The sequence is that of Tryptophan synthase beta chain from Aliivibrio salmonicida (strain LFI1238) (Vibrio salmonicida (strain LFI1238)).